The following is a 180-amino-acid chain: KxDL motif-containing protein 1 (180 aa).

Polar residues-rich tracts occupy residues 130–144 and 158–170; these read TSEQ…SPSI and QAPS…NGQI. Residues 130–180 are disordered; it reads TSEQSTESCDTSPSIISPAMSQDFEDLSQAPSDTPSVNGQILTDEELVHED.

Belongs to the KXD1 family. Associates with the BLOC-1 complex.

It localises to the lysosome membrane. Its function is as follows. As part of a BORC-like complex may play a role in lysosomes movement and localization at the cell periphery. Associated with the cytosolic face of lysosomes, this complex may couple lysosomes to microtubule plus-end-directed kinesin motor. May also be involved in the biogenesis of lysosome-related organelles such as melanosomes. The chain is KxDL motif-containing protein 1 (kxd1) from Xenopus laevis (African clawed frog).